The sequence spans 1270 residues: MGTKWTEEQELAINTRKCNLLVAAAAGSGKTAVLVERIIKMITEGENPVDIDKLLVVTFTNAAASEMRERIGDAISKALEKDPSSEVLQRQLALLNRASITTMHSFCLEVIKNNFHLIDLDPGFRIGDQTECELIKQDILADLFEDMYAKDDECFKDLVEAYGGSKSDDNLNSIILKFYNFIMSGPWPESWLKDKVEEFNINSIEELEGKKWIEVLKESIILDLNNAYSMLTQARDIAEMGGGLEPYLVNIYPEIIQVEELRIALSEGIVKFYNKLMGASFGRLKSVRKASVDDEKALEKTKSLRDESKKIIENLRDNVFETSLEEAVLGMKKMYPLMKCLSGLIIEFSNRYRDKKREKDILDFNDLEHLCLEILIDKDEEGNIKPSQVALEFKDKFEEVLVDEYQDSNTIQETIVGMVSRRDVENPNVFMVGDVKQSIYKFRQANPELFLEKYINYREFEDSNRKIMLYKNFRSREEIINGVNYIFKTLMSNTVGELEYDEKEALNLGASYGELNEENVEKEYIDEIENLKVAGDIELNILNKAGNKDYSDDELGEEEEDLDSIQLEARIIGKKINELMNPEDGSHYMVFDKDLGKYRKIKYKDIVILLRATKNWADTFVDELGTYGIPVYADTGTGYFQTIEIRTILALLHIIDNPMQDIYILSSLRSPIFSFTSEEFADLRLLNKDKYFFEIIKEVVDGIYDESISKDLKGKCKYFLDYLNKWREKAAYMPIDEFIWFLYSDTSYYGYVGTMPNGVQRQANLRILFQRAKQYESTSFKGLFNFINFINKLKKSSGDMGSAKILGENENVVRIMSIHKSKGLEFPVVILGGTGKQFNKMDLREDILLHETLGIGTNCIDVKKRIKYDTLQKHAIKKKCELEVLSEEMRILYVAFTRAKEKLIITGAVSDLEKSCENWCKASASSEDNRINPGNVLKGKSYLDWIGMALTKHKDGDAIRNVGNGDITLNLDDKSNWSFKSFDRSELLETNNNKKEKNNIDIFESNNWIESKKDIKEVIEIRNRLGFKYKYIESCNTPSNISVTELKRAHQEEEFMQESYNIIDNESSEENKKEKIKRKPRFMEERQEEFSAAKKGTITHFVMQHIDLDKVTYIDEIREEVLKMVKKELLTEEEGKVVNVFKIQKFFKSELGQRMLSSYKSGKKVYRELPFITEIPSSIIEKNLDPKIYGEEKVRLQGIIDAFFEEEDGYVLLDYKTDYVKEGEEEAFINKYKIQINLYKDTLNKILGEEVKEAYLYSFYLEKELKISKE.

Positions 3-476 (TKWTEEQELA…IMLYKNFRSR (474 aa)) constitute a UvrD-like helicase ATP-binding domain. An ATP-binding site is contributed by 24-31 (AAAGSGKT). Residues 528 to 823 (IENLKVAGDI…RIMSIHKSKG (296 aa)) form the UvrD-like helicase C-terminal domain.

It belongs to the helicase family. AddA subfamily. In terms of assembly, heterodimer of AddA and AddB/RexB. Requires Mg(2+) as cofactor.

The enzyme catalyses Couples ATP hydrolysis with the unwinding of duplex DNA by translocating in the 3'-5' direction.. The catalysed reaction is ATP + H2O = ADP + phosphate + H(+). In terms of biological role, the heterodimer acts as both an ATP-dependent DNA helicase and an ATP-dependent, dual-direction single-stranded exonuclease. Recognizes the chi site generating a DNA molecule suitable for the initiation of homologous recombination. The AddA nuclease domain is required for chi fragment generation; this subunit has the helicase and 3' -&gt; 5' nuclease activities. This is ATP-dependent helicase/nuclease subunit A from Clostridium perfringens (strain SM101 / Type A).